A 170-amino-acid polypeptide reads, in one-letter code: Protein SprT (170 aa).

Positions 22–163 (LQQANLTLQT…RCRRCGKTLR (142 aa)) constitute a SprT-like domain. A Zn(2+)-binding site is contributed by histidine 78. The active site involves glutamate 79. Histidine 82 provides a ligand contact to Zn(2+).

Belongs to the SprT family. Zn(2+) serves as cofactor.

Its subcellular location is the cytoplasm. The protein is Protein SprT of Pectobacterium atrosepticum (strain SCRI 1043 / ATCC BAA-672) (Erwinia carotovora subsp. atroseptica).